The sequence spans 115 residues: Probable 4-amino-4-deoxy-L-arabinose-phosphoundecaprenol flippase subunit ArnE (115 aa).

A run of 3 helical transmembrane segments spans residues 42-62, 65-85, and 93-112; these read PWPW…LLLL, VEVG…TLVA, and VDRR…ALLG. The 68-residue stretch at 46–113 folds into the EamA domain; sequence LALLALGLGL…IVAGVALLGR (68 aa).

The protein belongs to the ArnE family. In terms of assembly, heterodimer of ArnE and ArnF.

The protein localises to the cell inner membrane. It participates in bacterial outer membrane biogenesis; lipopolysaccharide biosynthesis. In terms of biological role, translocates 4-amino-4-deoxy-L-arabinose-phosphoundecaprenol (alpha-L-Ara4N-phosphoundecaprenol) from the cytoplasmic to the periplasmic side of the inner membrane. This chain is Probable 4-amino-4-deoxy-L-arabinose-phosphoundecaprenol flippase subunit ArnE, found in Pseudomonas paraeruginosa (strain DSM 24068 / PA7) (Pseudomonas aeruginosa (strain PA7)).